A 351-amino-acid polypeptide reads, in one-letter code: Putative aryl-alcohol dehydrogenase C977.14c (351 aa).

At serine 113 the chain carries Phosphoserine.

Belongs to the aldo/keto reductase family. Aldo/keto reductase 2 subfamily.

Its subcellular location is the cytoplasm. The protein localises to the nucleus. The chain is Putative aryl-alcohol dehydrogenase C977.14c from Schizosaccharomyces pombe (strain 972 / ATCC 24843) (Fission yeast).